The chain runs to 177 residues: Protein TERMINAL FLOWER 1 (177 aa).

Belongs to the phosphatidylethanolamine-binding protein family. Expressed below the apical dome of inflorescence and coflorescence meristems, and in inflorescence stem.

The protein localises to the cytoplasm. Functionally, controls inflorescence meristem identity and is required for maintenance of an indeterminate inflorescence. Prevents the expression of 'APETALA1' and 'LEAFY'. Also plays a role in the regulation of the time of flowering in the long-day flowering pathway. May form complexes with phosphorylated ligands by interfering with kinases and their effectors. The sequence is that of Protein TERMINAL FLOWER 1 (TFL1) from Arabidopsis thaliana (Mouse-ear cress).